The primary structure comprises 282 residues: MSTYLIGDIHGCYDELKIILAQVRFDPAVDTLWLTGDLVARGTGSLEVLRLVRSLGDSVQLVLGNHDLHLLAVYAGISRNKPKDRITPLLEAPDADELINWLRRQPVLQVDEEKKLVMAHAGITPQWDLATARQCAREVEAVLKSDSYPLFLDAMYGDMPNNWSPELSGLARLRFSTNVFTRMRYCFPNGQLEMNCKDTPEKASTPLRPWFALPGPVSERYSIVFGHWASLMGQGTPAHIYGLDTGCCWGGELTLLRWEDKAFTRVPSNRQNETSVENPISA.

Belongs to the Ap4A hydrolase family.

It carries out the reaction P(1),P(4)-bis(5'-adenosyl) tetraphosphate + H2O = 2 ADP + 2 H(+). Its function is as follows. Hydrolyzes diadenosine 5',5'''-P1,P4-tetraphosphate to yield ADP. In Sodalis glossinidius (strain morsitans), this protein is Bis(5'-nucleosyl)-tetraphosphatase, symmetrical.